The chain runs to 88 residues: MANTNSAKKMVRKIARRTAVNKARRSRVRTFVKKVEMAITSGDQAAAKTALVEAESELMRAVGKGVYHKNTGSRKVSRLSARVKSMSA.

Belongs to the bacterial ribosomal protein bS20 family.

Binds directly to 16S ribosomal RNA. This Maricaulis maris (strain MCS10) (Caulobacter maris) protein is Small ribosomal subunit protein bS20.